A 629-amino-acid polypeptide reads, in one-letter code: Solute carrier family 22 member 14 (629 aa).

Residues 1 to 21 (MKEDQNYKTAFGSQNSRDTHR) form a disordered region. The Cytoplasmic segment spans residues 1–67 (MKEDQNYKTA…IGEFGTFQWR (67 aa)). Residues 7 to 16 (YKTAFGSQNS) show a composition bias toward polar residues. Residues 68 to 88 (LVVLTFIPSILSTFFIFSHHF) form a helical membrane-spanning segment. The Extracellular portion of the chain corresponds to 89–183 (LLTAQRPYCN…LVCGNEPNKE (95 aa)). Asparagine 98, asparagine 116, asparagine 124, and asparagine 149 each carry an N-linked (GlcNAc...) asparagine glycan. The helical transmembrane segment at 184-204 (NGLTVFLSGVLTGSLLFGFLS) threads the bilayer. Residues 205–209 (DKLGR) are Cytoplasmic-facing. Residues 210 to 230 (YPIILLSLLGFLIFGFGTAFV) traverse the membrane as a helical segment. Residues 231-240 (SSFYQYLFFR) lie on the Extracellular side of the membrane. Residues 241–261 (FFVAQASVGYAICSVSLVMEW) traverse the membrane as a helical segment. Topologically, residues 262 to 269 (LVGEHRAQ) are cytoplasmic. A helical membrane pass occupies residues 270 to 290 (AVILQHSFLTIGVILLTGLAY). Topologically, residues 291 to 295 (KVVHW) are extracellular. Residues 296-316 (RLLCLLGGMPMFPLICNIWVL) traverse the membrane as a helical segment. The Cytoplasmic portion of the chain corresponds to 317-378 (RESPRWLMVR…DFCTNQHLFK (62 aa)). A helical membrane pass occupies residues 379 to 399 (VVLAIGCVWFTVSYISFTLNL). The Extracellular segment spans residues 400-409 (KMNDFGLDVY). Residues 410-430 (FVQMVRSIVAVPARLCCIILL) traverse the membrane as a helical segment. At 431 to 436 (EYFGRK) the chain is on the cytoplasmic side. Residues 437–457 (WALNLTLFLVTSMCLFLLFLP) form a helical membrane-spanning segment. Residues 458–463 (QEPKST) are Extracellular-facing. A helical membrane pass occupies residues 464-484 (IILTLMLAEFSMAGTLSIFFI). Topologically, residues 485 to 496 (YTAELLPTVLRS) are cytoplasmic. The helical transmembrane segment at 497–517 (TGLGMVSLAWVAGAISSVAIF) threads the bilayer. Topologically, residues 518–523 (KQTKTQ) are extracellular. A helical membrane pass occupies residues 524 to 544 (LPIFFCCLCCVLALCFSSLVP). The Cytoplasmic portion of the chain corresponds to 545-629 (ETGSQSLRDS…PVQSLKAQPP (85 aa)).

It belongs to the major facilitator (TC 2.A.1) superfamily. Organic cation transporter (TC 2.A.1.19) family. As to expression, testis-specific (at protein level). Specifically expressed in male germ cells (at protein level).

It localises to the mitochondrion inner membrane. The protein resides in the cell projection. The protein localises to the cilium. It is found in the flagellum membrane. The catalysed reaction is riboflavin(in) = riboflavin(out). Its function is as follows. Riboflavin transporter localized at the inner mitochondrial membrane of the spermatozoa midpiece, which is required for male fertility. SLC22A14-mediated riboflavin transport is essential for spermatozoa energy generation and motility: riboflavin is the precursor of FMN and FAD, which are coenzymes of many enzymes in the TCA cycle (the citric acid cycle) in mitochondria. Required for sperm motility and normal sperm flagellar structure. This Mus musculus (Mouse) protein is Solute carrier family 22 member 14.